The chain runs to 370 residues: Protein Mut11 (370 aa).

Positions 1 to 22 (MARGPGDTDMDEASADAAIPSS) are disordered. WD repeat units lie at residues 38–77 (GHTKAVAAVKFSPDGSLLASGSADRTVALWDAATGARVNT), 80–119 (GHSCGVSDVAWNPNGRYLATAADDHSLKLWDAETGACLRT), 122–162 (GHTN…CLRE), 165–204 (AHSDPVTSAAFSYDGSMVVTSSLDGLIRLWDTQTGHCLKT), 208–247 (RDSPPVSFAAFTPNAKYVLCNTLDGRAKLWDYAAGRTRRT), 262–301 (GFLGGSSSASFDLGCSMVVTGSEDGSLAAYDISTGHVVGR), and 329–370 (GHTA…PAAA).

The protein belongs to the WD repeat WDR5/wds family.

The protein localises to the nucleus. Functionally, part of a complex involved in 'Lys-4' histone H3 methylation. The sequence is that of Protein Mut11 (Mut11) from Chlamydomonas reinhardtii (Chlamydomonas smithii).